The chain runs to 221 residues: Lipoprotein-releasing system ATP-binding protein LolD (221 aa).

One can recognise an ABC transporter domain in the interval 6–220 (LILKNISKHY…YKLKHGLLNI (215 aa)). 42–49 (GSSGSGKS) is a binding site for ATP.

It belongs to the ABC transporter superfamily. Lipoprotein translocase (TC 3.A.1.125) family. In terms of assembly, the complex is composed of two ATP-binding proteins (LolD) and two transmembrane proteins (LolC and LolE).

The protein localises to the cell inner membrane. Its function is as follows. Part of the ABC transporter complex LolCDE involved in the translocation of mature outer membrane-directed lipoproteins, from the inner membrane to the periplasmic chaperone, LolA. Responsible for the formation of the LolA-lipoprotein complex in an ATP-dependent manner. In Rickettsia felis (strain ATCC VR-1525 / URRWXCal2) (Rickettsia azadi), this protein is Lipoprotein-releasing system ATP-binding protein LolD.